The primary structure comprises 7081 residues: Leucine-rich repeat transmembrane protein CCDC168 (7081 aa).

Residues 37–57 (WVAIFFIILLGIIFEIILMKA) traverse the membrane as a helical segment. LRR repeat units follow at residues 233 to 256 (PCPLAHLFLSRDQVRLLEENVRNQ) and 420 to 445 (NAEFLVLTLNPNLVTEDMPQLRSVKA). The disordered stretch occupies residues 717-745 (EDLQSSENSHLQLSNGEELPTSTPKTQRC). Polar residues predominate over residues 718-742 (DLQSSENSHLQLSNGEELPTSTPKT). Residues 865-890 (ADTLRIIRLSHSASKQEKLPDEKETQ) form an LRR 3 repeat. The tract at residues 943–1009 (QISSGSSKAP…DPKNPLTMPE (67 aa)) is disordered. Positions 958–970 (VQPQTLSTQTILE) are enriched in polar residues. Basic and acidic residues predominate over residues 981-999 (QVEKVKQSTDRPTDRESAG). The LRR 4 repeat unit spans residues 1050–1075 (LPAVALGSFNNHLLTLPYFKRQEIKK). Polar residues-rich tracts occupy residues 1274 to 1286 (KCTADSETPSPIS) and 1295 to 1304 (LNQTRESYIP). A disordered region spans residues 1274-1304 (KCTADSETPSPISGKSLIGDPLNQTRESYIP). Residues 1501 to 1527 (NCLTLELHINGQRLQHQTGFEQTTLET) form an LRR 5 repeat. Composition is skewed to basic and acidic residues over residues 1773-1784 (ETEKDTLREKRL) and 1793-1804 (TSPHEDSITSRD). 4 disordered regions span residues 1773 to 1804 (ETEKDTLREKRLSSTQVKQDTSPHEDSITSRD), 1954 to 1973 (KSPHGGEAQKANLTDMESGS), 2008 to 2031 (STHQMKDPDPCKSGSEPKSPEGRS), and 2083 to 2103 (TGKSKIGSIPRDTPWDENPRR). Polar residues predominate over residues 1964 to 1973 (ANLTDMESGS). The LRR 6 repeat unit spans residues 2373-2397 (KNQINTIQLSERKIILNPKCLTMKE). A disordered region spans residues 2637 to 2680 (GRHSPASEEMKRQNGRLKMADRSSPQGRPLQAKQSAVSQSPDTA). The segment covering 2668–2678 (AKQSAVSQSPD) has biased composition (polar residues). LRR repeat units follow at residues 2727–2749 (SKIHPLQIENKKEFKTADWKTRA), 2832–2855 (IQQQKSFQLSKNAVHRVLKAVYDS), 2862–2889 (IKKLTEVKMEKDKPKDRTCILPQPKLEK), 3433–3458 (LSSRTPGLDLFSADQLSTITKNRLEW), and 3630–3653 (ILSLPHFKLNKETIDGVISSNVKS). Residues 3730-3756 (SLSHSNSNSRTKAGKDKSGTLKGCLPP) form a disordered region. The LRR 12 repeat unit spans residues 3875–3898 (MRGITRFCLSSSTQQELSDTMEKC). 8 disordered regions span residues 4119–4260 (ELSH…DGDK), 4293–4428 (QGII…KQET), 4729–4756 (QESLPSRQTAPTKPTESLVKKEKQLLPQ), 4794–4817 (SPLSKRKEPQWGMKERAGQKQDRT), 4831–4859 (MPSLSHHRFSPSQPKLPISSGAGKSRLAN), 4928–4955 (GVQESKKEPGVVPRKSASFPPPPFYLNC), 4966–4985 (LGKTQFSFPPLKIQDSSDSG), and 5191–5212 (QKVKSGPGVMLSKSPSRSSPLH). Composition is skewed to basic and acidic residues over residues 4121–4133 (SHQKSSEAGEKAD), 4147–4176 (KAKDYMQQKEDDEVKISAKKDIMHPEDKGL), 4192–4245 (EPGK…EQQK), 4329–4361 (QKAKDYMQQKEEDEVKISAEKDLMHPEDKDLKG), 4375–4401 (EPGKRDGEGQEQGKEDGEGEEQGNRDG), and 4415–4426 (EQEKRDGHKSKQ). Positions 4731-4743 (SLPSRQTAPTKPT) are enriched in polar residues. 2 stretches are compositionally biased toward basic and acidic residues: residues 4746 to 4756 (LVKKEKQLLPQ) and 4798 to 4817 (KRKEPQWGMKERAGQKQDRT). Positions 5203–5212 (KSPSRSSPLH) are enriched in polar residues. One copy of the LRR 13 repeat lies at 5311–5336 (LSQLELDKETHLGNEMLRLKRPILRR). Residues 5467 to 5496 (LPDTEKTADAEARSGDVRKGKPHRSQKENR) form a disordered region. Residues 5469-5496 (DTEKTADAEARSGDVRKGKPHRSQKENR) are compositionally biased toward basic and acidic residues. One copy of the LRR 14 repeat lies at 5522–5545 (LNAKELVLNINKLEKKVHKDKDEA). Disordered regions lie at residues 5564–5583 (LDSGNKTDKDTPGITGSSCP) and 5763–5792 (QQETSSKVSPELAGSCKFDKPKEDGQSNDR). The span at 5779–5792 (KFDKPKEDGQSNDR) shows a compositional bias: basic and acidic residues. LRR repeat units follow at residues 5901-5924 (KQALLISEQEEGVLEFLPKSLFPP), 6259-6282 (PDLRIIEQEEKILKRILTPTECPS), 6419-6442 (HLESKALEIQLNLIPEMARKSLQM), 6552-6575 (HFSVKTLEIQMKAFPRIVRESYAM), and 6613-6637 (QIDLDLQYKYLRFLLGLPVGSTFPK). Disordered stretches follow at residues 6859 to 6878 (CKSHKSRKYRSSSKMKSPDW) and 6916 to 6950 (APLTESNIKSHLAKNQGKSHRHPESQERKKARSDL). The segment covering 6860 to 6871 (KSHKSRKYRSSS) has biased composition (basic residues). Basic and acidic residues predominate over residues 6937–6950 (HPESQERKKARSDL). Residues 7012-7036 (NRPFFFACVPADSLEVIPKTIRWTI) form an LRR 20 repeat.

It is found in the membrane. This chain is Leucine-rich repeat transmembrane protein CCDC168, found in Homo sapiens (Human).